Consider the following 239-residue polypeptide: Ribosomal RNA small subunit methyltransferase G (239 aa).

S-adenosyl-L-methionine-binding positions include G77, F82, 128-129, and R147; that span reads AE. Positions 216–239 are disordered; sequence KKQSQTPKKFPRKPGTPNKSPIEG.

The protein belongs to the methyltransferase superfamily. RNA methyltransferase RsmG family.

The protein resides in the cytoplasm. In terms of biological role, specifically methylates the N7 position of guanine in position 535 of 16S rRNA. This chain is Ribosomal RNA small subunit methyltransferase G, found in Bacillus licheniformis (strain ATCC 14580 / DSM 13 / JCM 2505 / CCUG 7422 / NBRC 12200 / NCIMB 9375 / NCTC 10341 / NRRL NRS-1264 / Gibson 46).